Here is a 152-residue protein sequence, read N- to C-terminus: Endoribonuclease YbeY (152 aa).

Residues His101, His105, and His111 each contribute to the Zn(2+) site. The interval 132 to 152 (PSSLIERTTKPAKKAAKRKKR) is disordered. Residues 141–152 (KPAKKAAKRKKR) are compositionally biased toward basic residues.

Belongs to the endoribonuclease YbeY family. Zn(2+) serves as cofactor.

The protein resides in the cytoplasm. Its function is as follows. Single strand-specific metallo-endoribonuclease involved in late-stage 70S ribosome quality control and in maturation of the 3' terminus of the 16S rRNA. The chain is Endoribonuclease YbeY from Koribacter versatilis (strain Ellin345).